Here is a 51-residue protein sequence, read N- to C-terminus: MARFAGVDIPNEKRIVISLTYVFGVGLQTSKKVLAAAGVSEDIRTKDLTSD.

It belongs to the universal ribosomal protein uS13 family. As to quaternary structure, part of the 30S ribosomal subunit. Forms a loose heterodimer with protein S19. Forms two bridges to the 50S subunit in the 70S ribosome.

Functionally, located at the top of the head of the 30S subunit, it contacts several helices of the 16S rRNA. In the 70S ribosome it contacts the 23S rRNA (bridge B1a) and protein L5 of the 50S subunit (bridge B1b), connecting the 2 subunits; these bridges are implicated in subunit movement. Contacts the tRNAs in the A and P-sites. The protein is Small ribosomal subunit protein uS13 (rpsM) of Lactococcus lactis subsp. cremoris (Streptococcus cremoris).